Here is a 357-residue protein sequence, read N- to C-terminus: Membrane-bound lytic murein transglycosylase C (357 aa).

The first 17 residues, 1 to 17 (MKLKKFLVLLLIPFLYA), serve as a signal peptide directing secretion. Cys-18 is lipidated: N-palmitoyl cysteine. A lipid anchor (S-diacylglycerol cysteine) is attached at Cys-18.

Belongs to the transglycosylase Slt family.

It is found in the cell outer membrane. It carries out the reaction Exolytic cleavage of the (1-&gt;4)-beta-glycosidic linkage between N-acetylmuramic acid (MurNAc) and N-acetylglucosamine (GlcNAc) residues in peptidoglycan, from either the reducing or the non-reducing ends of the peptidoglycan chains, with concomitant formation of a 1,6-anhydrobond in the MurNAc residue.. In terms of biological role, murein-degrading enzyme. May play a role in recycling of muropeptides during cell elongation and/or cell division. The polypeptide is Membrane-bound lytic murein transglycosylase C (Mannheimia succiniciproducens (strain KCTC 0769BP / MBEL55E)).